Reading from the N-terminus, the 118-residue chain is Acidic phospholipase A2 PA-3 (118 aa).

Intrachain disulfides connect Cys-11/Cys-71, Cys-27/Cys-117, Cys-29/Cys-45, Cys-44/Cys-98, Cys-51/Cys-91, Cys-60/Cys-84, and Cys-78/Cys-89. Tyr-28, Gly-30, and Gly-32 together coordinate Ca(2+). His-48 is a catalytic residue. A Ca(2+)-binding site is contributed by Asp-49. The active site involves Asp-92.

Belongs to the phospholipase A2 family. Group I subfamily. D49 sub-subfamily. The cofactor is Ca(2+). In terms of tissue distribution, expressed by the venom gland.

The protein localises to the secreted. The catalysed reaction is a 1,2-diacyl-sn-glycero-3-phosphocholine + H2O = a 1-acyl-sn-glycero-3-phosphocholine + a fatty acid + H(+). Its function is as follows. PLA2 catalyzes the calcium-dependent hydrolysis of the 2-acyl groups in 3-sn-phosphoglycerides. The sequence is that of Acidic phospholipase A2 PA-3 from Pseudechis australis (Mulga snake).